Consider the following 783-residue polypeptide: Spindle pole body protein ppc89 (783 aa).

Ser157 is modified (phosphoserine). Disordered regions lie at residues 180-216, 434-458, 471-504, and 528-610; these read FDSP…ETPS, KESN…MNEA, ENKS…PTSG, and LSQS…MKGN. Polar residues-rich tracts occupy residues 201 to 216, 437 to 453, and 474 to 504; these read RSKT…ETPS, NVTS…SKPL, and SGAN…PTSG. The segment covering 536 to 551 has biased composition (basic residues); that stretch reads PVKHRKRRPKSKRRIT. Positions 566–590 are enriched in acidic residues; it reads ESDEGSEEISLDSEYSDILSDDGDF.

It is found in the cytoplasm. The protein resides in the cytoskeleton. It localises to the microtubule organizing center. The protein localises to the spindle pole body. Functionally, has a role in meiosis. This Schizosaccharomyces pombe (strain 972 / ATCC 24843) (Fission yeast) protein is Spindle pole body protein ppc89 (ppc89).